The following is a 148-amino-acid chain: Hemoglobin subunit alpha (148 aa).

Serine 1 is modified (N-acetylserine). Residues 8–148 enclose the Globin domain; sequence DYSAADRAEL…VCHELSSRYR (141 aa). Residue histidine 66 coordinates O2. Residue histidine 95 participates in heme b binding.

The protein belongs to the globin family. Heterotetramer of two alpha chains and two beta chains. Red blood cells.

Involved in oxygen transport from the lung to the various peripheral tissues. This Heterodontus portusjacksoni (Port Jackson shark) protein is Hemoglobin subunit alpha (HBA).